Here is a 137-residue protein sequence, read N- to C-terminus: uncharacterized protein (137 aa).

A helical transmembrane segment spans residues Tyr116–Ile136.

The protein localises to the host membrane. This is an uncharacterized protein from His1 virus (isolate Australia/Victoria) (His1V).